A 327-amino-acid polypeptide reads, in one-letter code: Methionine import ATP-binding protein MetN (327 aa).

Positions 3-239 constitute an ABC transporter domain; sequence VELKNIEKIY…PKHAVTKELL (237 aa). An ATP-binding site is contributed by 36 to 43; the sequence is GYSGAGKS.

Belongs to the ABC transporter superfamily. Methionine importer (TC 3.A.1.24) family. In terms of assembly, the complex is composed of two ATP-binding proteins (MetN), two transmembrane proteins (MetI) and a solute-binding protein (MetQ).

It localises to the cell inner membrane. It catalyses the reaction L-methionine(out) + ATP + H2O = L-methionine(in) + ADP + phosphate + H(+). The catalysed reaction is D-methionine(out) + ATP + H2O = D-methionine(in) + ADP + phosphate + H(+). Its function is as follows. Part of the ABC transporter complex MetNIQ involved in methionine import. Responsible for energy coupling to the transport system. The protein is Methionine import ATP-binding protein MetN of Helicobacter pylori (strain HPAG1).